We begin with the raw amino-acid sequence, 215 residues long: Cytochrome b6 (215 aa).

A helical membrane pass occupies residues 32–52; the sequence is IFYCFGGIVFTCFLVQVATGF. Cysteine 35 serves as a coordination point for heme c. Positions 86 and 100 each coordinate heme b. The next 3 membrane-spanning stretches (helical) occupy residues 90–110, 116–136, and 186–206; these read ASMM…TGGF, LTWV…VTGY, and AHTF…FLMI. 2 residues coordinate heme b: histidine 187 and histidine 202.

Belongs to the cytochrome b family. PetB subfamily. In terms of assembly, the 4 large subunits of the cytochrome b6-f complex are cytochrome b6, subunit IV (17 kDa polypeptide, PetD), cytochrome f and the Rieske protein, while the 4 small subunits are PetG, PetL, PetM and PetN. The complex functions as a dimer. It depends on heme b as a cofactor. Heme c serves as cofactor.

Its subcellular location is the plastid. It is found in the chloroplast thylakoid membrane. Component of the cytochrome b6-f complex, which mediates electron transfer between photosystem II (PSII) and photosystem I (PSI), cyclic electron flow around PSI, and state transitions. The sequence is that of Cytochrome b6 from Skeletonema costatum (Marine centric diatom).